We begin with the raw amino-acid sequence, 100 residues long: Aspartyl/glutamyl-tRNA(Asn/Gln) amidotransferase subunit C (100 aa).

The protein belongs to the GatC family. As to quaternary structure, heterotrimer of A, B and C subunits.

The enzyme catalyses L-glutamyl-tRNA(Gln) + L-glutamine + ATP + H2O = L-glutaminyl-tRNA(Gln) + L-glutamate + ADP + phosphate + H(+). The catalysed reaction is L-aspartyl-tRNA(Asn) + L-glutamine + ATP + H2O = L-asparaginyl-tRNA(Asn) + L-glutamate + ADP + phosphate + 2 H(+). Functionally, allows the formation of correctly charged Asn-tRNA(Asn) or Gln-tRNA(Gln) through the transamidation of misacylated Asp-tRNA(Asn) or Glu-tRNA(Gln) in organisms which lack either or both of asparaginyl-tRNA or glutaminyl-tRNA synthetases. The reaction takes place in the presence of glutamine and ATP through an activated phospho-Asp-tRNA(Asn) or phospho-Glu-tRNA(Gln). The chain is Aspartyl/glutamyl-tRNA(Asn/Gln) amidotransferase subunit C from Streptococcus pneumoniae (strain JJA).